Consider the following 1058-residue polypeptide: Ubiquitin-like modifier-activating enzyme 1 (1058 aa).

Positions 1-47 (MSSSPLSKKRRVSGPDPKPGSNCSPAQSVLSEVPSVPTNGMAKNGSE) are disordered. At Ser-2 the chain carries N-acetylserine. Ser-2 carries the post-translational modification N-acetylalanine. Residue Ser-4 is modified to Phosphoserine. The Nuclear localization signal signature appears at 5–11 (PLSKKRR). Residues Ser-13, Ser-21, Ser-24, and Ser-46 each carry the phosphoserine modification. Positions 21–30 (SNCSPAQSVL) are enriched in polar residues. Tyr-55 is modified (phosphotyrosine). A run of 2 repeats spans residues 63-199 (GHEA…GQLF) and 459-611 (GSDL…QVVI). Residues 63-611 (GHEAMKRLQT…GTKGNVQVVI (549 aa)) form a 2 approximate repeats region. ATP contacts are provided by residues Ala-478, Asp-504, Arg-515, Lys-528, and 576 to 577 (DN). Lys-528 bears the N6-succinyllysine mark. Cys-632 (glycyl thioester intermediate) is an active-site residue. N6-acetyllysine is present on Lys-671. Thr-800 carries the post-translational modification Phosphothreonine. Phosphoserine occurs at positions 810, 816, 820, and 835. At Lys-980 the chain carries N6-acetyllysine.

Belongs to the ubiquitin-activating E1 family. Monomer. Interacts with GAN (via BTB domain). In terms of processing, ISGylated. Detected in erythrocytes (at protein level). Ubiquitous.

The protein resides in the cytoplasm. Its subcellular location is the mitochondrion. The protein localises to the nucleus. The catalysed reaction is ATP + ubiquitin + [E1 ubiquitin-activating enzyme]-L-cysteine = AMP + diphosphate + S-ubiquitinyl-[E1 ubiquitin-activating enzyme]-L-cysteine.. Its pathway is protein modification; protein ubiquitination. Functionally, catalyzes the first step in ubiquitin conjugation to mark cellular proteins for degradation through the ubiquitin-proteasome system. Activates ubiquitin by first adenylating its C-terminal glycine residue with ATP, and thereafter linking this residue to the side chain of a cysteine residue in E1, yielding a ubiquitin-E1 thioester and free AMP. Essential for the formation of radiation-induced foci, timely DNA repair and for response to replication stress. Promotes the recruitment of TP53BP1 and BRCA1 at DNA damage sites. This chain is Ubiquitin-like modifier-activating enzyme 1 (UBA1), found in Homo sapiens (Human).